The primary structure comprises 182 residues: Large ribosomal subunit protein uL6 (182 aa).

Belongs to the universal ribosomal protein uL6 family. In terms of assembly, part of the 50S ribosomal subunit.

In terms of biological role, this protein binds to the 23S rRNA, and is important in its secondary structure. It is located near the subunit interface in the base of the L7/L12 stalk, and near the tRNA binding site of the peptidyltransferase center. This Nostoc sp. (strain PCC 7120 / SAG 25.82 / UTEX 2576) protein is Large ribosomal subunit protein uL6.